The following is a 275-amino-acid chain: Formamidopyrimidine-DNA glycosylase (275 aa).

The active-site Schiff-base intermediate with DNA is the proline 2. Glutamate 3 (proton donor) is an active-site residue. The active-site Proton donor; for beta-elimination activity is the lysine 58. Residues histidine 93, arginine 111, and arginine 156 each contribute to the DNA site. The FPG-type zinc finger occupies 241-275 (FVYDRAGLPCRVCGTPIRQIVQGQRSTYFCPTCQR). Arginine 265 functions as the Proton donor; for delta-elimination activity in the catalytic mechanism.

The protein belongs to the FPG family. As to quaternary structure, monomer. Zn(2+) serves as cofactor.

The catalysed reaction is Hydrolysis of DNA containing ring-opened 7-methylguanine residues, releasing 2,6-diamino-4-hydroxy-5-(N-methyl)formamidopyrimidine.. It carries out the reaction 2'-deoxyribonucleotide-(2'-deoxyribose 5'-phosphate)-2'-deoxyribonucleotide-DNA = a 3'-end 2'-deoxyribonucleotide-(2,3-dehydro-2,3-deoxyribose 5'-phosphate)-DNA + a 5'-end 5'-phospho-2'-deoxyribonucleoside-DNA + H(+). Involved in base excision repair of DNA damaged by oxidation or by mutagenic agents. Acts as a DNA glycosylase that recognizes and removes damaged bases. Has a preference for oxidized purines, such as 7,8-dihydro-8-oxoguanine (8-oxoG). Has AP (apurinic/apyrimidinic) lyase activity and introduces nicks in the DNA strand. Cleaves the DNA backbone by beta-delta elimination to generate a single-strand break at the site of the removed base with both 3'- and 5'-phosphates. The protein is Formamidopyrimidine-DNA glycosylase of Burkholderia ambifaria (strain MC40-6).